The following is a 233-amino-acid chain: Adenosine 5'-phosphosulfate reductase 1 (233 aa).

[4Fe-4S] cluster is bound by residues Cys-120, Cys-121, Cys-203, and Cys-206. The active-site Nucleophile; cysteine thiosulfonate intermediate is the Cys-229.

It belongs to the PAPS reductase family. CysH subfamily. [4Fe-4S] cluster serves as cofactor.

Its subcellular location is the cytoplasm. It carries out the reaction [thioredoxin]-disulfide + sulfite + AMP + 2 H(+) = adenosine 5'-phosphosulfate + [thioredoxin]-dithiol. It functions in the pathway sulfur metabolism; hydrogen sulfide biosynthesis; sulfite from sulfate. Functionally, catalyzes the formation of sulfite from adenosine 5'-phosphosulfate (APS) using thioredoxin as an electron donor. In Bacillus subtilis (strain 168), this protein is Adenosine 5'-phosphosulfate reductase 1 (cysH).